We begin with the raw amino-acid sequence, 639 residues long: tRNA uridine 5-carboxymethylaminomethyl modification enzyme MnmG (639 aa).

13–18 (GGGHAG) is a binding site for FAD. 274-288 (GPRYCPSIEDKIHRF) provides a ligand contact to NAD(+).

This sequence belongs to the MnmG family. In terms of assembly, homodimer. Heterotetramer of two MnmE and two MnmG subunits. It depends on FAD as a cofactor.

The protein localises to the cytoplasm. Functionally, NAD-binding protein involved in the addition of a carboxymethylaminomethyl (cmnm) group at the wobble position (U34) of certain tRNAs, forming tRNA-cmnm(5)s(2)U34. In Polynucleobacter asymbioticus (strain DSM 18221 / CIP 109841 / QLW-P1DMWA-1) (Polynucleobacter necessarius subsp. asymbioticus), this protein is tRNA uridine 5-carboxymethylaminomethyl modification enzyme MnmG.